A 137-amino-acid chain; its full sequence is Putative pre-16S rRNA nuclease (137 aa).

This sequence belongs to the YqgF nuclease family.

It is found in the cytoplasm. Functionally, could be a nuclease involved in processing of the 5'-end of pre-16S rRNA. This Bacillus cereus (strain AH187) protein is Putative pre-16S rRNA nuclease.